We begin with the raw amino-acid sequence, 288 residues long: Programmed cell death protein 1 (288 aa).

The N-terminal stretch at 1–24 (MQIPQAPWPVVWAVLQLGWRPGWF) is a signal peptide. Residues 25–34 (LDSPDRPWNP) form a nivolumab binding region. Residues 25–170 (LDSPDRPWNP…RPAGQFQTLV (146 aa)) are Extracellular-facing. Positions 35-145 (PTFSPALLVV…ESLRAELRVT (111 aa)) constitute an Ig-like V-type domain. Residues asparagine 49, asparagine 58, asparagine 74, and asparagine 116 are each glycosylated (N-linked (GlcNAc...) asparagine). Cysteines 54 and 123 form a disulfide. Positions 70–77 (MSPSNQTD) are interaction with CD274/PDCD1L1. A pembrolizumab binding region spans residues 74–99 (NQTDKLAAFPEDRSQPGQDCRFRVTQ). A helical transmembrane segment spans residues 171–191 (VGVVGGLLGSLVLLVWVLAVI). The Cytoplasmic portion of the chain corresponds to 192-288 (CSRAARGTIG…PEDGHCSWPL (97 aa)). An ITIM motif motif is present at residues 221 to 226 (VDYGEL). The residue at position 223 (tyrosine 223) is a Phosphotyrosine. Lysine 233 participates in a covalent cross-link: Glycyl lysine isopeptide (Lys-Gly) (interchain with G-Cter in ubiquitin). Threonine 234 carries the post-translational modification Phosphothreonine; by MAPK3. The ITSM motif motif lies at 247–251 (EYATI). Position 248 is a phosphotyrosine (tyrosine 248). Residues 254–288 (PSGMGTSSPARRGSADGPRSAQPLRPEDGHCSWPL) form a disordered region. Basic and acidic residues predominate over residues 278–288 (RPEDGHCSWPL).

In terms of assembly, monomer. Interacts with CD274/PDCD1L1. Interacts with CD273/PDCD1LG2. Interacts with FBXO38; leading to ubiquitination and degradation of PDCD1 by the proteasome. In terms of processing, ubiquitinated at Lys-233 by the SCF(FBXO38) complex, leading to its proteasomal degradation. Ubiquitinated via 'Lys-48'-linked polyubiquitin chains. Deubiquitinated and thus stabilized by USP5. Post-translationally, tyrosine phosphorylated at Tyr-223 (within ITIM motif) and Tyr-248 (ITSM motif) upon ligand binding. Phosphorylation at Tyr-248 promotes the recruitment of the protein tyrosine phosphatase PTPN11/SHP-2 that mediates dephosphorylation of key TCR proximal signaling molecules, such as ZAP70, PRKCQ/PKCtheta and CD247/CD3zeta. Phosphorylation at Thr-234 promotes the recruitment of the deubiquitinase USP5. N-glycosylation at Asn-58 contains at least two N-acetylglucosamine units and one fucose. N-glycosylation does not affect binding to nivolumab drug.

It localises to the cell membrane. With respect to regulation, inhibited by pembrolizumab (also named MK-3475 or lambrolizumab), a monoclonal antibody that prevents the interaction with CD274/PDCD1L1. Inhibited by nivolumab (also named ONO-4538, BMS-936558 or Opdivo), a monoclonal antibody that prevents the interaction with CD274/PDCD1L1. The interaction with nivolumab is not dependent on glycosylation and depends on a loop at the N-terminus (N-terminal loop, corresponding to residues 25-34). Targeting the interaction between PDCD1 and CD274/PDCD1L1 with pembrolizumab and nivolumab antibodies has demonstrated great promise as a strategy for controlling and eradicating cancer. Pembrolizumab and nivolumab are used for treatment of patients with advanced melanoma. These antibodies are also effective against other cancers, such as non-small cell lung cancer, renal cell carcinoma, bladder cancer and Hodgkin's lymphoma. Inhibitory receptor on antigen activated T-cells that plays a critical role in induction and maintenance of immune tolerance to self. Delivers inhibitory signals upon binding to ligands CD274/PDCD1L1 and CD273/PDCD1LG2. Following T-cell receptor (TCR) engagement, PDCD1 associates with CD3-TCR in the immunological synapse and directly inhibits T-cell activation. Suppresses T-cell activation through the recruitment of PTPN11/SHP-2: following ligand-binding, PDCD1 is phosphorylated within the ITSM motif, leading to the recruitment of the protein tyrosine phosphatase PTPN11/SHP-2 that mediates dephosphorylation of key TCR proximal signaling molecules, such as ZAP70, PRKCQ/PKCtheta and CD247/CD3zeta. Functionally, the PDCD1-mediated inhibitory pathway is exploited by tumors to attenuate anti-tumor immunity and escape destruction by the immune system, thereby facilitating tumor survival. The interaction with CD274/PDCD1L1 inhibits cytotoxic T lymphocytes (CTLs) effector function. The blockage of the PDCD1-mediated pathway results in the reversal of the exhausted T-cell phenotype and the normalization of the anti-tumor response, providing a rationale for cancer immunotherapy. The sequence is that of Programmed cell death protein 1 from Homo sapiens (Human).